A 275-amino-acid chain; its full sequence is MKIANFEVGNGKPFFLMSGPCVIESEQMAMDTAGYLAEVTKDLGINFVYKSSFDKANRSSINSFRGLGVDKGLEILAKVKKTYNVPVVTDVHEDTPFAEVAEVVDVMQTPAFLCRQTNFILDVCKQGKPVNIKKGQFLAPWDMQHVVAKAKSTGNEQIMVCERGVSFGYNNLVSDMRSLEIMKSTGCPVVFDATHSVQLPGGQGSSSGGQREFVPVLSKAAMAVGIDGLFMETHPKPAEALSDGPNSFPMYKIKEFLSLLKELDHLVKSQPKIEL.

Belongs to the KdsA family.

The protein resides in the cytoplasm. It catalyses the reaction D-arabinose 5-phosphate + phosphoenolpyruvate + H2O = 3-deoxy-alpha-D-manno-2-octulosonate-8-phosphate + phosphate. It functions in the pathway carbohydrate biosynthesis; 3-deoxy-D-manno-octulosonate biosynthesis; 3-deoxy-D-manno-octulosonate from D-ribulose 5-phosphate: step 2/3. Its pathway is bacterial outer membrane biogenesis; lipopolysaccharide biosynthesis. The chain is 2-dehydro-3-deoxyphosphooctonate aldolase from Francisella philomiragia subsp. philomiragia (strain ATCC 25017 / CCUG 19701 / FSC 153 / O#319-036).